The primary structure comprises 405 residues: S-arrestin (405 aa).

The residue at position 234 (threonine 234) is a Phosphothreonine.

Belongs to the arrestin family. Monomer. Homodimer. Homotetramer. Interacts with RHO (via the phosphorylated C-terminus).

It localises to the cell projection. Its subcellular location is the cilium. It is found in the photoreceptor outer segment. The protein localises to the membrane. Functionally, binds to photoactivated, phosphorylated RHO and terminates RHO signaling via G-proteins by competing with G-proteins for the same binding site on RHO. May play a role in preventing light-dependent degeneration of retinal photoreceptor cells. The sequence is that of S-arrestin (SAG) from Canis lupus familiaris (Dog).